A 299-amino-acid polypeptide reads, in one-letter code: MAEFPASLLILNGKSTDNLPLREAIMLLREEGMTIHVRVTWEKGDAVRFVEEARKLGVATVIAGGGDGTINEVSTALIQCEGDDIPALGILPLGTANDFATSVGIPEALDKALKLAIAGNAIAIDMAQVNKQTCFINMATGGFGTRITTETPEKLKAALGGVSYIIHGLMRMDTLQPDRCEIRGENFHWQGDALVIGIGNGRQAGGGQQLCPNALINDGLLQLRIFTGDEIIPTLVSTLKSDEDNPNIIEGASSWFDIQAPHEITFNLDGEPLSGQNFHIEILPAALRCRLPPDCPLLR.

One can recognise a DAGKc domain in the interval 2 to 133 (AEFPASLLIL…IDMAQVNKQT (132 aa)). ATP-binding positions include threonine 40, 66 to 72 (GDGTINE), and threonine 95. The Mg(2+) site is built by leucine 215, aspartate 218, and leucine 220. Catalysis depends on glutamate 271, which acts as the Proton acceptor.

Belongs to the diacylglycerol/lipid kinase family. YegS lipid kinase subfamily. It depends on Mg(2+) as a cofactor. Requires Ca(2+) as cofactor.

Its subcellular location is the cytoplasm. Probably phosphorylates lipids; the in vivo substrate is unknown. The polypeptide is Probable lipid kinase YegS (Escherichia coli O127:H6 (strain E2348/69 / EPEC)).